The primary structure comprises 274 residues: MSSASRSLARLAALALAALAAAPLAASAQPKAARGKTEVTWYGHAAFVVTTPGGTVLAIDPWLSNPKAPEPGLAGKLPKVDYILVSHGHFDHVGDAIAIAKRTGAKLITNFDLGSSLVAAGYPKDQAGMDTLGNMGGTIQAGDAAVTMVTAVHSSGFTDEKGTGHPGGNPMGFVIQVKGGPTIYHTGDTDLTQDMKQLPERFGRVDVMLTCIGGHFTMDPKAAAIAVGYVHPRTVVPMHFGTFPAIAGTPDELRAALKGKAEVRVLEPGKPVGF.

It belongs to the UPF0173 family.

The polypeptide is UPF0173 metal-dependent hydrolase Adeh_1068 (Anaeromyxobacter dehalogenans (strain 2CP-C)).